Reading from the N-terminus, the 105-residue chain is Large ribosomal subunit protein uL23 (105 aa).

Belongs to the universal ribosomal protein uL23 family. As to quaternary structure, part of the 50S ribosomal subunit. Contacts protein L29, and trigger factor when it is bound to the ribosome.

One of the early assembly proteins it binds 23S rRNA. One of the proteins that surrounds the polypeptide exit tunnel on the outside of the ribosome. Forms the main docking site for trigger factor binding to the ribosome. The polypeptide is Large ribosomal subunit protein uL23 (Ureaplasma urealyticum serovar 10 (strain ATCC 33699 / Western)).